The following is a 107-amino-acid chain: Iron-sulfur cluster assembly protein CyaY (107 aa).

It belongs to the frataxin family.

Functionally, involved in iron-sulfur (Fe-S) cluster assembly. May act as a regulator of Fe-S biogenesis. The protein is Iron-sulfur cluster assembly protein CyaY of Edwardsiella ictaluri (strain 93-146).